Consider the following 276-residue polypeptide: MRLLILLLFSFGIIYSHGDEIPTQKQVLVSIVPYKFLVEQISGDTCQVFSIVMGNRDPHNYELPPKYIEKIRQADLWFRIGEGFERTCERIVSCKQVDLAANIDKIMNGSCCQRFLNFDTHTWLSPKNLKIQIESIAEALIAIAPEHADLYRKNCSLLQDQLDLLDQKVSSIVSQSSQRNVLVAHGAFAYFCRDYGFVQHTIERSNHSELSPKDIVRVEQTIRDHNLHSVVLLKHAGKRSSAALVRKFNMTPVLLDPYAEDVFSNLIAIATAFADL.

A signal peptide spans 1 to 18 (MRLLILLLFSFGIIYSHG). Residues H59, H121, H185, and D256 each coordinate a divalent metal cation.

It belongs to the bacterial solute-binding protein 9 family.

The protein localises to the periplasm. Functionally, part of an ATP-binding cassette (ABC) transport system involved in metal import. Binds a metal with high affinity and specificity and delivers it to the membrane permease for translocation into the cytoplasm. This chain is Putative metal-binding protein TC_0696, found in Chlamydia muridarum (strain MoPn / Nigg).